The primary structure comprises 639 residues: Chaperone protein HtpG (639 aa).

The a; substrate-binding stretch occupies residues 1–343 (MEATATKEHL…SNDLPLNVSR (343 aa)). Positions 344–564 (EILQESKDIE…THDMSGNLER (221 aa)) are b. The interval 565 to 639 (LLKSAGQKVT…QLFLSTGSKE (75 aa)) is c.

This sequence belongs to the heat shock protein 90 family. In terms of assembly, homodimer.

It localises to the cytoplasm. In terms of biological role, molecular chaperone. Has ATPase activity. The protein is Chaperone protein HtpG of Nitrosospira multiformis (strain ATCC 25196 / NCIMB 11849 / C 71).